The sequence spans 153 residues: Hemoglobin-3 (153 aa).

An N-acetylserine modification is found at Ser2. The 147-residue stretch at 4 to 150 (GLTGPQKAAL…ICRVQGDFMK (147 aa)) folds into the Globin domain. Heme b is bound at residue His99.

This sequence belongs to the globin family. As to quaternary structure, homotetramer.

The protein resides in the cytoplasm. This Phacoides pectinatus (Thick lucine) protein is Hemoglobin-3.